A 160-amino-acid chain; its full sequence is MSVIKKPDLTDPKLRAKLAKGMGHNYYGEPAWPNDLLYVFPVCILGTFACCIGLAVMAPTQMGEPADPFNTPLEILPEWYFFPTFNLLRVLPNKLLGVLAMARVPAGLITVPFIENVNKFQNPFRRPIASLVFILGFFTAVWLGIGACLPIDKAVSLGFW.

3 helical membrane passes run 36–56, 95–115, and 131–151; these read LLYVFPVCILGTFACCIGLAV, LLGVLAMARVPAGLITVPFIE, and LVFILGFFTAVWLGIGACLPI.

It belongs to the cytochrome b family. PetD subfamily. As to quaternary structure, the 4 large subunits of the cytochrome b6-f complex are cytochrome b6, subunit IV (17 kDa polypeptide, petD), cytochrome f and the Rieske protein, while the 4 small subunits are petG, petL, petM and petN. The complex functions as a dimer.

It localises to the plastid. Its subcellular location is the chloroplast thylakoid membrane. Functionally, component of the cytochrome b6-f complex, which mediates electron transfer between photosystem II (PSII) and photosystem I (PSI), cyclic electron flow around PSI, and state transitions. The chain is Cytochrome b6-f complex subunit 4 from Trieres chinensis (Marine centric diatom).